We begin with the raw amino-acid sequence, 61 residues long: Small ribosomal subunit protein uS14 (61 aa).

The Zn(2+) site is built by C24, C27, C40, and C43.

The protein belongs to the universal ribosomal protein uS14 family. Zinc-binding uS14 subfamily. In terms of assembly, part of the 30S ribosomal subunit. Contacts proteins S3 and S10. Zn(2+) is required as a cofactor.

In terms of biological role, binds 16S rRNA, required for the assembly of 30S particles and may also be responsible for determining the conformation of the 16S rRNA at the A site. The polypeptide is Small ribosomal subunit protein uS14 (Caldicellulosiruptor bescii (strain ATCC BAA-1888 / DSM 6725 / KCTC 15123 / Z-1320) (Anaerocellum thermophilum)).